The chain runs to 525 residues: Putative ribose/galactose/methyl galactoside import ATP-binding protein (525 aa).

The tract at residues 1–30 (MFGSATANPPAQRDLPSSDSDSPTPDAQPP) is disordered. The span at 14 to 25 (DLPSSDSDSPTP) shows a compositional bias: low complexity. ABC transporter domains are found at residues 33–269 (LEIS…VGRE) and 279–523 (KPPG…SGHK). 65 to 72 (GENGAGKS) lines the ATP pocket.

Belongs to the ABC transporter superfamily. Carbohydrate importer 2 (CUT2) (TC 3.A.1.2) family.

The protein localises to the cell inner membrane. It catalyses the reaction D-ribose(out) + ATP + H2O = D-ribose(in) + ADP + phosphate + H(+). The enzyme catalyses D-galactose(out) + ATP + H2O = D-galactose(in) + ADP + phosphate + H(+). Its function is as follows. Part of an ABC transporter complex involved in carbohydrate import. Could be involved in ribose, galactose and/or methyl galactoside import. Responsible for energy coupling to the transport system. The polypeptide is Putative ribose/galactose/methyl galactoside import ATP-binding protein (Pseudomonas savastanoi pv. phaseolicola (strain 1448A / Race 6) (Pseudomonas syringae pv. phaseolicola (strain 1448A / Race 6))).